Consider the following 1563-residue polypeptide: Pentafunctional AROM polypeptide (1563 aa).

The 3-dehydroquinate synthase stretch occupies residues 1–382 (MAEPISNPTR…YEPKASVVED (382 aa)). Residues 48-50 (DTN), 82-85 (EYSK), 113-115 (GGV), and aspartate 118 contribute to the NAD(+) site. Arginine 129 is a binding site for 7-phospho-2-dehydro-3-deoxy-D-arabino-heptonate. 138–139 (TT) contacts NAD(+). 7-phospho-2-dehydro-3-deoxy-D-arabino-heptonate is bound by residues aspartate 145 and lysine 151. Lysine 160 is an NAD(+) binding site. Asparagine 161 serves as a coordination point for 7-phospho-2-dehydro-3-deoxy-D-arabino-heptonate. Residues 178 to 181 (FLNT) and asparagine 189 contribute to the NAD(+) site. Glutamate 193 contributes to the Zn(2+) binding site. 7-phospho-2-dehydro-3-deoxy-D-arabino-heptonate is bound by residues 193-196 (EVIK) and lysine 248. The active-site Proton acceptor; for 3-dehydroquinate synthase activity is the glutamate 258. 7-phospho-2-dehydro-3-deoxy-D-arabino-heptonate contacts are provided by residues 262–266 (RNLLN) and histidine 269. Histidine 269 serves as a coordination point for Zn(2+). Histidine 273 acts as the Proton acceptor; for 3-dehydroquinate synthase activity in catalysis. Residues histidine 285 and lysine 354 each coordinate 7-phospho-2-dehydro-3-deoxy-D-arabino-heptonate. Zn(2+) is bound at residue histidine 285. The tract at residues 395–834 (VFAGVPKDLN…WDTMSNYFKV (440 aa)) is EPSP synthase. Cysteine 816 acts as the For EPSP synthase activity in catalysis. The segment at 857-1051 (PKSIFIIGMR…KKKPHSFFVS (195 aa)) is shikimate kinase. 864 to 871 (GMRGAGKS) is an ATP binding site. Positions 1052–1265 (LTVPNVSKAL…AAPGQLSAAE (214 aa)) are 3-dehydroquinase. Histidine 1168 (proton acceptor; for 3-dehydroquinate dehydratase activity) is an active-site residue. Catalysis depends on lysine 1196, which acts as the Schiff-base intermediate with substrate; for 3-dehydroquinate dehydratase activity. The interval 1278–1563 (PRSFHLFGNP…TDAQAAVMGN (286 aa)) is shikimate dehydrogenase.

In the N-terminal section; belongs to the sugar phosphate cyclases superfamily. Dehydroquinate synthase family. This sequence in the 2nd section; belongs to the EPSP synthase family. It in the 3rd section; belongs to the shikimate kinase family. The protein in the 4th section; belongs to the type-I 3-dehydroquinase family. In the C-terminal section; belongs to the shikimate dehydrogenase family. As to quaternary structure, homodimer. The cofactor is Zn(2+).

The protein localises to the cytoplasm. It carries out the reaction 7-phospho-2-dehydro-3-deoxy-D-arabino-heptonate = 3-dehydroquinate + phosphate. It catalyses the reaction 3-dehydroquinate = 3-dehydroshikimate + H2O. The catalysed reaction is shikimate + NADP(+) = 3-dehydroshikimate + NADPH + H(+). The enzyme catalyses shikimate + ATP = 3-phosphoshikimate + ADP + H(+). It carries out the reaction 3-phosphoshikimate + phosphoenolpyruvate = 5-O-(1-carboxyvinyl)-3-phosphoshikimate + phosphate. The protein operates within metabolic intermediate biosynthesis; chorismate biosynthesis; chorismate from D-erythrose 4-phosphate and phosphoenolpyruvate: step 2/7. It functions in the pathway metabolic intermediate biosynthesis; chorismate biosynthesis; chorismate from D-erythrose 4-phosphate and phosphoenolpyruvate: step 3/7. It participates in metabolic intermediate biosynthesis; chorismate biosynthesis; chorismate from D-erythrose 4-phosphate and phosphoenolpyruvate: step 4/7. Its pathway is metabolic intermediate biosynthesis; chorismate biosynthesis; chorismate from D-erythrose 4-phosphate and phosphoenolpyruvate: step 5/7. The protein operates within metabolic intermediate biosynthesis; chorismate biosynthesis; chorismate from D-erythrose 4-phosphate and phosphoenolpyruvate: step 6/7. Its function is as follows. The AROM polypeptide catalyzes 5 consecutive enzymatic reactions in prechorismate polyaromatic amino acid biosynthesis. The chain is Pentafunctional AROM polypeptide from Neurospora crassa (strain ATCC 24698 / 74-OR23-1A / CBS 708.71 / DSM 1257 / FGSC 987).